We begin with the raw amino-acid sequence, 23 residues long: Phallacidin proprotein (23 aa).

Pro1 is a propeptide. A cross-link (cyclopeptide (Ala-Pro)) is located at residues 2–8 (AWLVDCP). The segment at residues 3 to 7 (WLVDC) is a cross-link (2'-cysteinyl-6'-hydroxytryptophan sulfoxide (Trp-Cys)). A propeptide spanning residues 9 to 23 (CVGDDISRLLTRGEK) is cleaved from the precursor.

The protein belongs to the MSDIN fungal toxin family. Processed by the macrocyclase-peptidase enzyme POPB to yield a toxic cyclic heptapeptide. POPB first removes 10 residues from the N-terminus. Conformational trapping of the remaining peptide forces the enzyme to release this intermediate rather than proceed to macrocyclization. The enzyme rebinds the remaining peptide in a different conformation and catalyzes macrocyclization of the N-terminal 7 residues.

Major toxin that belongs to the bicyclic heptapeptides called phallotoxins. Although structurally related to amatoxins, phallotoxins have a different mode of action, which is the stabilization of F-actin. Phallotoxins are poisonous when administered parenterally, but not orally because of poor absorption. In Amanita rimosa, this protein is Phallacidin proprotein.